We begin with the raw amino-acid sequence, 658 residues long: NADPH-dependent diflavin oxidoreductase 1 (658 aa).

The Flavodoxin-like domain occupies 16 to 160 (LTILYMTQTG…ELGPWMNRFW (145 aa)). Residues 22–27 (TQTGTS), 69–72 (STTG), 107–116 (LGDSTYPRFC), and aspartate 142 each bind FMN. The region spanning 215-502 (QGWSISILDK…IKPGYLTLPP (288 aa)) is the FAD-binding FR-type domain. FAD contacts are provided by residues arginine 400, 430–433 (REFS), and 474–477 (GLCT). NADP(+) contacts are provided by residues threonine 514, 574-575 (SR), and 580-584 (KTYVQ). Residue tryptophan 657 participates in FAD binding.

It belongs to the NADPH-dependent diflavin oxidoreductase NDOR1 family. The protein in the N-terminal section; belongs to the flavodoxin family. This sequence in the C-terminal section; belongs to the flavoprotein pyridine nucleotide cytochrome reductase family. In terms of assembly, interacts with DRE2; as part of the cytosolic iron-sulfur (Fe-S) protein assembly (CIA) machinery. FAD is required as a cofactor. It depends on FMN as a cofactor.

The protein resides in the cytoplasm. It localises to the mitochondrion. It catalyses the reaction 2 oxidized [2Fe-2S]-[protein] + NADPH = 2 reduced [2Fe-2S]-[protein] + NADP(+) + H(+). Its function is as follows. NADPH-dependent reductase which is a central component of the cytosolic iron-sulfur (Fe-S) protein assembly (CIA) machinery. Transfers electrons from NADPH via its FAD and FMN prosthetic groups to the [2Fe-2S] cluster of DRE2, another key component of the CIA machinery. In turn, this reduced cluster provides electrons for assembly of cytosolic iron-sulfur cluster proteins. Positively controls H(2)O(2)-induced cell death. The sequence is that of NADPH-dependent diflavin oxidoreductase 1 from Mycosarcoma maydis (Corn smut fungus).